We begin with the raw amino-acid sequence, 514 residues long: Beta-secretase 2 (514 aa).

An N-terminal signal peptide occupies residues 1–20 (MGALLRALLLPLLAQWLLRA). Positions 21–62 (VPVLAPAPFTLPLQVAGAANHRASTVPGLGTPELPRADGLAL) are excised as a propeptide. At 21–469 (VPVLAPAPFT…NEPILWIVSY (449 aa)) the chain is on the extracellular side. The Peptidase A1 domain occupies 88–425 (YYLEMLIGTP…DRAQRRVGFA (338 aa)). Residue Asp106 is part of the active site. The N-linked (GlcNAc...) asparagine glycan is linked to Asn166. 3 disulfide bridges follow: Cys229–Cys429, Cys288–Cys453, and Cys340–Cys389. The active site involves Asp299. An N-linked (GlcNAc...) asparagine glycan is attached at Asn362. Residues 470 to 490 (ALMSVCGAILLVLILLLLFPL) traverse the membrane as a helical segment. Over 491 to 514 (HCRHAPRDPEVVNDESSLVRHRWK) the chain is Cytoplasmic.

This sequence belongs to the peptidase A1 family. In terms of assembly, monomer. Interacts with RTN3 and RTN4. Post-translationally, undergoes autoproteolytic cleavage. In terms of processing, glycosylated.

It is found in the cell membrane. Its subcellular location is the golgi apparatus. It localises to the endoplasmic reticulum. The protein resides in the endosome. The protein localises to the melanosome. It catalyses the reaction Broad endopeptidase specificity. Cleaves Glu-Val-Asn-Leu-|-Asp-Ala-Glu-Phe in the Swedish variant of Alzheimer's amyloid precursor protein.. Its function is as follows. Responsible for the proteolytic processing of the amyloid precursor protein (APP). Cleaves APP, between residues 690 and 691, leading to the generation and extracellular release of beta-cleaved soluble APP, and a corresponding cell-associated C-terminal fragment which is later released by gamma-secretase. It has also been shown that it can cleave APP between residues 671 and 672. Involved in the proteolytic shedding of PMEL at early stages of melanosome biogenesis. Cleaves PMEL within the M-beta fragment to release the amyloidogenic PMEL luminal fragment containing M-alpha and a small portion of M-beta N-terminus. This is a prerequisite step for subsequent processing and assembly of PMEL fibrils into amyloid sheets. Responsible also for the proteolytic processing of CLTRN in pancreatic beta cells. In Rattus norvegicus (Rat), this protein is Beta-secretase 2 (Bace2).